The following is a 173-amino-acid chain: UPF0316 protein Amet_0954 (173 aa).

The next 3 helical transmembrane spans lie at 3–23 (LVLGYLFIFVARVTDVGMGTV), 38–58 (AIGFVESIIYILAIGKVLEAL), and 61–81 (PVNILVYATGFAAGNYVGIYI).

It belongs to the UPF0316 family.

Its subcellular location is the cell membrane. This chain is UPF0316 protein Amet_0954, found in Alkaliphilus metalliredigens (strain QYMF).